A 570-amino-acid polypeptide reads, in one-letter code: 15-cis-phytoene desaturase, chloroplastic/chromoplastic (570 aa).

The transit peptide at 1-91 (MSIVGLVSVV…AQLSASFRSS (91 aa)) directs the protein to the chloroplast and chromoplast. FAD contacts are provided by residues 104–120 (GAGL…ADAG), Ala108, 127–128 (ES), Lys135, 152–153 (HI), and Tyr158. Arg293 contacts substrate. Position 524 (Asp524) interacts with FAD. Residue Ala532 participates in substrate binding. Met534 is an FAD binding site.

The protein belongs to the carotenoid/retinoid oxidoreductase family. In terms of assembly, homotetramer. The cofactor is FAD. Expressed more strongly in flowers than in leaves.

Its subcellular location is the plastid. The protein resides in the chloroplast. It is found in the chromoplast. It localises to the membrane. It catalyses the reaction 2 a plastoquinone + 15-cis-phytoene = 9,9',15-tri-cis-zeta-carotene + 2 a plastoquinol. Its pathway is carotenoid biosynthesis; lycopene biosynthesis. In terms of biological role, converts phytoene into zeta-carotene via the intermediary of phytofluene by the symmetrical introduction of two double bonds at the C-11 and C-11' positions of phytoene with a concomitant isomerization of two neighboring double bonds at the C9 and C9' positions from trans to cis. The sequence is that of 15-cis-phytoene desaturase, chloroplastic/chromoplastic (PDS1) from Narcissus pseudonarcissus (Daffodil).